Consider the following 393-residue polypeptide: Chalcone synthase DIII (393 aa).

The active site involves Cys164.

Belongs to the thiolase-like superfamily. Chalcone/stilbene synthases family.

The catalysed reaction is (E)-4-coumaroyl-CoA + 3 malonyl-CoA + 3 H(+) = 2',4,4',6'-tetrahydroxychalcone + 3 CO2 + 4 CoA. It functions in the pathway secondary metabolite biosynthesis; flavonoid biosynthesis. In terms of biological role, the primary product of this enzyme is 4,2',4',6'-tetrahydroxychalcone (also termed naringenin-chalcone or chalcone) which can under specific conditions spontaneously isomerize into naringenin. The sequence is that of Chalcone synthase DIII (CHS-DIII) from Ipomoea batatas (Sweet potato).